Reading from the N-terminus, the 320-residue chain is Ubiquinone biosynthesis protein COQ4, mitochondrial (320 aa).

The N-terminal 31 residues, 1 to 31, are a transit peptide targeting the mitochondrion; sequence MFARSALGRSDQLVTALNSQKRQFVLTAATT. The Zn(2+) site is built by His205, Asp206, His209, and Glu221.

Belongs to the COQ4 family. As to quaternary structure, component of a multi-subunit COQ enzyme complex, composed of at least COQ3, COQ4, COQ5, COQ6, COQ7 and COQ9. It depends on Zn(2+) as a cofactor.

It is found in the mitochondrion inner membrane. It carries out the reaction a 4-hydroxy-3-methoxy-5-(all-trans-polyprenyl)benzoate + H(+) = a 2-methoxy-6-(all-trans-polyprenyl)phenol + CO2. Its pathway is cofactor biosynthesis; ubiquinone biosynthesis. Its function is as follows. Lyase that catalyzes the C1-decarboxylation of 4-hydroxy-3-methoxy-5-(all-trans-polyprenyl)benzoic acid into 2-methoxy-6-(all-trans-polyprenyl)phenol during ubiquinone biosynthesis. In Scheffersomyces stipitis (strain ATCC 58785 / CBS 6054 / NBRC 10063 / NRRL Y-11545) (Yeast), this protein is Ubiquinone biosynthesis protein COQ4, mitochondrial.